The following is a 162-amino-acid chain: Shikimate kinase (162 aa).

ATP is bound at residue 11–16 (GSGKSS). Serine 15 serves as a coordination point for Mg(2+). Positions 33, 57, and 80 each coordinate substrate. Arginine 116 provides a ligand contact to ATP. Arginine 132 lines the substrate pocket.

Belongs to the shikimate kinase family. Monomer. It depends on Mg(2+) as a cofactor.

Its subcellular location is the cytoplasm. The enzyme catalyses shikimate + ATP = 3-phosphoshikimate + ADP + H(+). It participates in metabolic intermediate biosynthesis; chorismate biosynthesis; chorismate from D-erythrose 4-phosphate and phosphoenolpyruvate: step 5/7. In terms of biological role, catalyzes the specific phosphorylation of the 3-hydroxyl group of shikimic acid using ATP as a cosubstrate. The polypeptide is Shikimate kinase (Helicobacter pylori (strain G27)).